The sequence spans 160 residues: Eukaryotic translation initiation factor 5A (160 aa).

Positions 1–10 are enriched in basic and acidic residues; sequence MSDDDHHFES. The disordered stretch occupies residues 1 to 23; sequence MSDDDHHFESSADAGASKTYPQQ. Lysine 52 carries the hypusine modification.

The protein belongs to the eIF-5A family. Post-translationally, lys-52 undergoes hypusination, a unique post-translational modification that consists in the addition of a butylamino group from spermidine to lysine side chain, leading to the formation of the unusual amino acid hypusine. eIF-5As are the only known proteins to undergo this modification, which is essential for their function.

Translation factor that promotes translation elongation and termination, particularly upon ribosome stalling at specific amino acid sequence contexts. Binds between the exit (E) and peptidyl (P) site of the ribosome and promotes rescue of stalled ribosome: specifically required for efficient translation of polyproline-containing peptides as well as other motifs that stall the ribosome. Acts as a ribosome quality control (RQC) cofactor by joining the RQC complex to facilitate peptidyl transfer during CAT tailing step. The protein is Eukaryotic translation initiation factor 5A of Dianthus caryophyllus (Carnation).